The sequence spans 68 residues: Tau-scoloptoxin(04)-Ssm1b (68 aa).

Positions 1–25 are cleaved as a signal peptide; sequence MLKSFCILSVFMVLFLAKFPDLCSG. Residues 26–36 constitute a propeptide that is removed on maturation; the sequence is EEISPLKIVVR. Intrachain disulfides connect Cys45-Cys56 and Cys50-Cys63. The highly charged C-terminal region, binds to TRPV1 channel stretch occupies residues 55-67; sequence RCSIVDKQCIKKE.

The protein belongs to the scoloptoxin-04 family. In terms of tissue distribution, expressed by the venom gland.

The protein localises to the secreted. Extremely potent agonist and potentiator of TRPV1 (EC(50)=470-521.5 nM (mouse)). It strongly promotes the heat activation process by downshifting the activation threshold temperature. It preferably binds to the activated channel and promotes its opening. Holding the channel closed by cooling prevents binding of this toxin, leaving it ineffective. The toxin binds to the charge-rich outer pore region of the channel where it directly interacts with the pore helix and turret, two adjacent structural elements known to be critical for activation gating of TRPV1. In comparison with Sm1b, induces a TRPV1 desensitization with slower kinetics (20 seconds). In vivo, induces pain in mice after intraplantar injection. Functionally, potent agonist and probable potentiator of TRPV1 (EC(50)=38.35 uM (mouse)). Also binds to the outer pore region of TRPV1. In comparison with Sm1a, induces a TRPV1 desensitization with faster kinetics (2 seconds) and leads to a more complete TRPV1 desensitization. Desensitization is achieved by reducing both the open probability and the single-channel conductance upon prolonged exposure. The polypeptide is Tau-scoloptoxin(04)-Ssm1b (Scolopendra mutilans (Chinese red-headed centipede)).